Here is a 221-residue protein sequence, read N- to C-terminus: N-(5'-phosphoribosyl)anthranilate isomerase (221 aa).

This sequence belongs to the TrpF family.

The enzyme catalyses N-(5-phospho-beta-D-ribosyl)anthranilate = 1-(2-carboxyphenylamino)-1-deoxy-D-ribulose 5-phosphate. It functions in the pathway amino-acid biosynthesis; L-tryptophan biosynthesis; L-tryptophan from chorismate: step 3/5. This is N-(5'-phosphoribosyl)anthranilate isomerase from Geobacillus thermodenitrificans (strain NG80-2).